The chain runs to 290 residues: PIH1 domain-containing protein 1 (290 aa).

A phosphoserine mark is found at Ser-12 and Ser-173.

Belongs to the PIH1 family. Component of the R2TP complex composed at least of RUVBL1, RUVBL2, RPAP3 and PIHD1. Component of the PAQosome complex which is responsible for the biogenesis of several protein complexes and which consists of R2TP complex members RUVBL1, RUVBL2, RPAP3 and PIH1D1, URI complex members PFDN2, PFDN6, PDRG1, UXT and URI1 as well as ASDURF, POLR2E and DNAAF10/WDR92. Interacts with phosphorylated TELO2 and mediates interaction of TELO2 with the R2TP complex. Interacts with phosphorylated ECD, EFTUD2/SNRP116, RPB1 and UBR5 and with RPB1 in a phosphorylation-independent manner. Interacts with the core C/D box snoRNP particle components NOP58 and FBL and with RUVBL1/TIP49. Interacts with RPAP3 and DNAAF10. Interacts with histone H4 and with SWI/SNF complex member SMARCB1/SNF5. Interacts with the mTORC1 complex member RPTOR. Interacts with MSL1. In terms of tissue distribution, expressed at low levels in normal mammary epithelial cells (at protein level). Highest expression in lung, leukocyte and placenta. Expressed at lower levels in brain, prostate, colon, heart, small intestine, liver, ovary, pancreas, skeletal muscle, spleen, testis and thymus.

The protein resides in the nucleus. Involved in the assembly of C/D box small nucleolar ribonucleoprotein (snoRNP) particles. Recruits the SWI/SNF complex to the core promoter of rRNA genes and enhances pre-rRNA transcription. Mediates interaction of TELO2 with the R2TP complex which is necessary for the stability of MTOR and SMG1. Positively regulates the assembly and activity of the mTORC1 complex. In Homo sapiens (Human), this protein is PIH1 domain-containing protein 1 (PIH1D1).